A 208-amino-acid polypeptide reads, in one-letter code: Virion protein US10 homolog (208 aa).

Residues alanine 17–arginine 61 form a disordered region. A zinc finger lies at cysteine 167 to cysteine 179.

The protein belongs to the herpesviridae US10 family. In terms of processing, phosphorylated.

The protein localises to the virion tegument. It is found in the host nucleus matrix. The polypeptide is Virion protein US10 homolog (Homo sapiens (Human)).